The primary structure comprises 639 residues: MNAQPLLPRIQSPADVRRLSRAELKQLADELREFVLQSVSRTGGHLSSNLGTVELTVALHHVFDTPEDRLVWDVGHQTYPHKILTGRRDRMSTLRQLGGLSGFPRRDESEYDTFGTAHSSTSISAALGMALAAQQKGEKRHAVAIIGDGSMTAGMAFEALNNGGMPHAGRVPNLLVILNDNDMSISPPVGALNKYLARLLSGRFYAAAREGAKSVLKSAPTLFELARRFEEHAKGMVVPGTIFEEFGFNYVGPIDGHDLDALIPTLENLRDKPGAQFLHVVTKKGYGYKLAEADPIAYHGPGKFDPQIGLVKPATPPKTTFTQVFGQWLCDMAAADPKLVAITPAMREGSGMVEFHKRFPERYHDVGIAEQHAVTFAAGLACEGLRPVVAIYSTFLQRAYDQLIHDVALQNLPMVFALDRAGLVGADGATHAGAYDIAFVRCIPNMSLLAPADEAETRRALSTAFAHDGPVAVRYPRGSGAGTAVETGFETLPWGRGEVRRQAGGHVRGPRIAILAFGTLLYPALAAAEKLDATVANMRFIKPLDAALVEQLARTHDALVTVEEGCLMGGAGSAVLEALQAAGLQTPVLTLGLPDQFIEHGDPALLLAACGLDSAGIEAAIQKRFCASAPSHLRPVANG.

Thiamine diphosphate-binding positions include His76 and 117–119 (AHS). Asp148 provides a ligand contact to Mg(2+). Residues 149–150 (GS), Asn181, Tyr288, and Glu370 contribute to the thiamine diphosphate site. Residue Asn181 participates in Mg(2+) binding.

The protein belongs to the transketolase family. DXPS subfamily. Homodimer. Mg(2+) serves as cofactor. It depends on thiamine diphosphate as a cofactor.

The enzyme catalyses D-glyceraldehyde 3-phosphate + pyruvate + H(+) = 1-deoxy-D-xylulose 5-phosphate + CO2. It participates in metabolic intermediate biosynthesis; 1-deoxy-D-xylulose 5-phosphate biosynthesis; 1-deoxy-D-xylulose 5-phosphate from D-glyceraldehyde 3-phosphate and pyruvate: step 1/1. Its function is as follows. Catalyzes the acyloin condensation reaction between C atoms 2 and 3 of pyruvate and glyceraldehyde 3-phosphate to yield 1-deoxy-D-xylulose-5-phosphate (DXP). This is 1-deoxy-D-xylulose-5-phosphate synthase from Leptothrix cholodnii (strain ATCC 51168 / LMG 8142 / SP-6) (Leptothrix discophora (strain SP-6)).